An 827-amino-acid chain; its full sequence is Ribosome biogenesis protein ERB1 (827 aa).

The tract at residues 1–129 (MVHSKKDKSV…DFSDDNDTRP (129 aa)) is disordered. Over residues 7-18 (DKSVMKHSDIKK) the composition is skewed to basic and acidic residues. Residues 45–60 (CDSDDDEEFQSAEEEV) are compositionally biased toward acidic residues. Residues 61–77 (LSSGSESSSKEGSTPGS) are compositionally biased toward low complexity. Acidic residues-rich tracts occupy residues 81–99 (GSDE…DEDA) and 108–124 (EEGD…FSDD). The required for interaction with NOP7 stretch occupies residues 291 to 409 (RFVPSKHEAK…LRKVPGYGES (119 aa)). The tract at residues 409 to 445 (SVRERFERSLDLYLAPRVRKNKLNIDPESLIPELPSP) is required for interaction with YTM1. WD repeat units lie at residues 461-500 (GHKG…EVYK), 509-549 (NQDD…FEVE), 657-695 (KSKG…LVKK), 698-737 (PGAR…TPYK), 741-780 (YHEK…DMMK), and 796-827 (VNSL…LWTT).

It belongs to the WD repeat BOP1/ERB1 family. Component of the NOP7 complex, composed of ERB1, NOP7 and YTM1. The complex is held together by ERB1, which interacts with NOP7 via its N-terminal domain and with YTM1 via a high-affinity interaction between the seven-bladed beta-propeller domains of the 2 proteins. The NOP7 complex associates with the 66S pre-ribosome.

It localises to the nucleus. The protein resides in the nucleolus. Its subcellular location is the nucleoplasm. Its function is as follows. Component of the NOP7 complex, which is required for maturation of the 25S and 5.8S ribosomal RNAs and formation of the 60S ribosome. The sequence is that of Ribosome biogenesis protein ERB1 from Eremothecium gossypii (strain ATCC 10895 / CBS 109.51 / FGSC 9923 / NRRL Y-1056) (Yeast).